Consider the following 238-residue polypeptide: Cysteine-rich venom protein pseudechetoxin (238 aa).

Positions 1–19 are cleaved as a signal peptide; the sequence is MIAFIVLLSLAAVLQQSSG. A propeptide spanning residues 20–27 is cleaved from the precursor; that stretch reads TADFASES. Positions 38-164 constitute an SCP domain; the sequence is VDKHNALRRS…SSKYLYVCQY (127 aa). Residues Thr51 and Ser106 each coordinate Zn(2+). Disulfide bonds link Cys75–Cys153, Cys92–Cys165, Cys148–Cys162, Cys184–Cys191, Cys187–Cys196, Cys200–Cys233, Cys209–Cys227, and Cys218–Cys231. A ShKT domain is found at 200 to 233; sequence CKRNNDFSNCKSLAKKSKCQTEWIKKKCPASCFC.

In terms of tissue distribution, expressed by the venom gland.

The protein localises to the secreted. Functionally, blocks olfactory (CNGA2) and retinal (CNGA1) cyclic nucleotide-gated (CNG) ion channel currents. Does not inhibit retinal (CNGA3) currents. It forms high-affinity contacts with the pore turret region and most likely inhibits CNG channel current by blocking the external entrance to the transmembrane pore. Is really more potent that Pseudecin. Does not affect neither depolarization- nor caffeine-induced contraction arterial smooth muscle. In Pseudechis australis (Mulga snake), this protein is Cysteine-rich venom protein pseudechetoxin.